Reading from the N-terminus, the 213-residue chain is dITP/XTP pyrophosphatase (213 aa).

7–12 contacts substrate; sequence TSNLDK. The Proton acceptor role is filled by Asp-74. Asp-74 is a Mg(2+) binding site. Substrate is bound by residues Ser-75, 165 to 168, Lys-188, and 193 to 194; these read FGYD and HR.

It belongs to the HAM1 NTPase family. As to quaternary structure, homodimer. It depends on Mg(2+) as a cofactor.

It catalyses the reaction XTP + H2O = XMP + diphosphate + H(+). The catalysed reaction is dITP + H2O = dIMP + diphosphate + H(+). The enzyme catalyses ITP + H2O = IMP + diphosphate + H(+). In terms of biological role, pyrophosphatase that catalyzes the hydrolysis of nucleoside triphosphates to their monophosphate derivatives, with a high preference for the non-canonical purine nucleotides XTP (xanthosine triphosphate), dITP (deoxyinosine triphosphate) and ITP. Seems to function as a house-cleaning enzyme that removes non-canonical purine nucleotides from the nucleotide pool, thus preventing their incorporation into DNA/RNA and avoiding chromosomal lesions. The chain is dITP/XTP pyrophosphatase from Campylobacter concisus (strain 13826).